Consider the following 57-residue polypeptide: Large ribosomal subunit protein bL33 (57 aa).

The protein belongs to the bacterial ribosomal protein bL33 family.

The protein is Large ribosomal subunit protein bL33 of Shewanella sp. (strain MR-4).